The following is a 122-amino-acid chain: Large ribosomal subunit protein uL14 (122 aa).

It belongs to the universal ribosomal protein uL14 family. As to quaternary structure, part of the 50S ribosomal subunit. Forms a cluster with proteins L3 and L19. In the 70S ribosome, L14 and L19 interact and together make contacts with the 16S rRNA in bridges B5 and B8.

In terms of biological role, binds to 23S rRNA. Forms part of two intersubunit bridges in the 70S ribosome. This Kocuria rhizophila (strain ATCC 9341 / DSM 348 / NBRC 103217 / DC2201) protein is Large ribosomal subunit protein uL14.